The following is a 187-amino-acid chain: dCTP deaminase, dUMP-forming (187 aa).

DCTP-binding positions include 101-106 (KSSLGR) and D119. Catalysis depends on E129, which acts as the Proton donor/acceptor. DCTP contacts are provided by Q148, Y162, and Q174.

This sequence belongs to the dCTP deaminase family. As to quaternary structure, homotrimer.

The enzyme catalyses dCTP + 2 H2O = dUMP + NH4(+) + diphosphate. It functions in the pathway pyrimidine metabolism; dUMP biosynthesis; dUMP from dCTP: step 1/1. In terms of biological role, bifunctional enzyme that catalyzes both the deamination of dCTP to dUTP and the hydrolysis of dUTP to dUMP without releasing the toxic dUTP intermediate. This chain is dCTP deaminase, dUMP-forming, found in Corynebacterium kroppenstedtii (strain DSM 44385 / JCM 11950 / CIP 105744 / CCUG 35717).